The primary structure comprises 188 residues: dTTP/UTP pyrophosphatase (188 aa).

Aspartate 70 serves as the catalytic Proton acceptor.

The protein belongs to the Maf family. YhdE subfamily. A divalent metal cation serves as cofactor.

Its subcellular location is the cytoplasm. The enzyme catalyses dTTP + H2O = dTMP + diphosphate + H(+). The catalysed reaction is UTP + H2O = UMP + diphosphate + H(+). Its function is as follows. Nucleoside triphosphate pyrophosphatase that hydrolyzes dTTP and UTP. May have a dual role in cell division arrest and in preventing the incorporation of modified nucleotides into cellular nucleic acids. This chain is dTTP/UTP pyrophosphatase, found in Clostridium botulinum (strain Alaska E43 / Type E3).